A 173-amino-acid chain; its full sequence is Shikimate kinase 1 (173 aa).

14 to 19 is an ATP binding site; that stretch reads GAGKST. Residue Ser18 participates in Mg(2+) binding. Substrate is bound by residues Asp36, Arg60, and Gly82. Residue Arg120 participates in ATP binding. Arg140 contacts substrate. Gln157 contributes to the ATP binding site.

This sequence belongs to the shikimate kinase family. Monomer. Requires Mg(2+) as cofactor.

It localises to the cytoplasm. The enzyme catalyses shikimate + ATP = 3-phosphoshikimate + ADP + H(+). It participates in metabolic intermediate biosynthesis; chorismate biosynthesis; chorismate from D-erythrose 4-phosphate and phosphoenolpyruvate: step 5/7. In terms of biological role, catalyzes the specific phosphorylation of the 3-hydroxyl group of shikimic acid using ATP as a cosubstrate. The polypeptide is Shikimate kinase 1 (Citrobacter koseri (strain ATCC BAA-895 / CDC 4225-83 / SGSC4696)).